A 380-amino-acid polypeptide reads, in one-letter code: Cytochrome b (380 aa).

4 helical membrane passes run 34–54, 78–99, 114–134, and 179–199; these read FGSL…FLAM, WLLR…YFHI, WNIG…GYVL, and FFTF…IHLL. Heme b-binding residues include His84 and His98. 2 residues coordinate heme b: His183 and His197. His202 lines the a ubiquinone pocket. 4 helical membrane passes run 227 to 247, 289 to 309, 321 to 341, and 348 to 368; these read YKDL…STFA, LGGV…PIIH, IAKT…WIGG, and FITI…LLIP.

This sequence belongs to the cytochrome b family. The cytochrome bc1 complex contains 3 respiratory subunits (MT-CYB, CYC1 and UQCRFS1), 2 core proteins (UQCRC1 and UQCRC2) and probably 6 low-molecular weight proteins. It depends on heme b as a cofactor.

The protein localises to the mitochondrion inner membrane. Component of the ubiquinol-cytochrome c reductase complex (complex III or cytochrome b-c1 complex) that is part of the mitochondrial respiratory chain. The b-c1 complex mediates electron transfer from ubiquinol to cytochrome c. Contributes to the generation of a proton gradient across the mitochondrial membrane that is then used for ATP synthesis. In Rana amurensis (Siberian wood frog), this protein is Cytochrome b (mt-cyb).